A 96-amino-acid chain; its full sequence is UPF0235 protein YggU (96 aa).

The protein belongs to the UPF0235 family.

The polypeptide is UPF0235 protein YggU (Salmonella typhi).